The primary structure comprises 333 residues: Fructose-1,6-bisphosphatase class 1 1 (333 aa).

Residues Glu81, Asp100, Leu102, and Asp103 each contribute to the Mg(2+) site. Substrate is bound by residues 103–106 (DGSS) and Asn191. Glu263 lines the Mg(2+) pocket.

This sequence belongs to the FBPase class 1 family. In terms of assembly, homotetramer. Mg(2+) is required as a cofactor.

It localises to the cytoplasm. The enzyme catalyses beta-D-fructose 1,6-bisphosphate + H2O = beta-D-fructose 6-phosphate + phosphate. It functions in the pathway carbohydrate biosynthesis; Calvin cycle. The chain is Fructose-1,6-bisphosphatase class 1 1 from Cereibacter sphaeroides (strain ATCC 17023 / DSM 158 / JCM 6121 / CCUG 31486 / LMG 2827 / NBRC 12203 / NCIMB 8253 / ATH 2.4.1.) (Rhodobacter sphaeroides).